Reading from the N-terminus, the 620-residue chain is 1-deoxy-D-xylulose-5-phosphate synthase (620 aa).

Thiamine diphosphate-binding positions include His80 and 121–123; that span reads GHS. Asp152 contributes to the Mg(2+) binding site. Thiamine diphosphate-binding positions include 153 to 154, Asn181, Tyr288, and Glu370; that span reads GA. Asn181 contributes to the Mg(2+) binding site.

Belongs to the transketolase family. DXPS subfamily. Homodimer. Mg(2+) is required as a cofactor. Requires thiamine diphosphate as cofactor.

The catalysed reaction is D-glyceraldehyde 3-phosphate + pyruvate + H(+) = 1-deoxy-D-xylulose 5-phosphate + CO2. It functions in the pathway metabolic intermediate biosynthesis; 1-deoxy-D-xylulose 5-phosphate biosynthesis; 1-deoxy-D-xylulose 5-phosphate from D-glyceraldehyde 3-phosphate and pyruvate: step 1/1. Catalyzes the acyloin condensation reaction between C atoms 2 and 3 of pyruvate and glyceraldehyde 3-phosphate to yield 1-deoxy-D-xylulose-5-phosphate (DXP). This chain is 1-deoxy-D-xylulose-5-phosphate synthase, found in Pseudoalteromonas translucida (strain TAC 125).